A 1105-amino-acid polypeptide reads, in one-letter code: Integrator complex subunit 2 (1105 aa).

The chain crosses the membrane as a helical span at residues 822-842; sequence FVFCSPYLLMILLRILKGSLA.

Belongs to the Integrator subunit 2 family. Belongs to the multiprotein complex Integrator, at least composed of IntS1, IntS2, IntS3, IntS4, omd/IntS5, IntS6, defl/IntS7, IntS8, IntS9, IntS10, IntS11, IntS12, asun/IntS13, IntS14 and IntS15. The core complex associates with protein phosphatase 2A subunits mts/PP2A and Pp2A-29B, to form the Integrator-PP2A (INTAC) complex.

The protein resides in the nucleus membrane. It localises to the nucleus. Its function is as follows. Component of the integrator complex, a multiprotein complex that terminates RNA polymerase II (Pol II) transcription in the promoter-proximal region of genes. The integrator complex provides a quality checkpoint during transcription elongation by driving premature transcription termination of transcripts that are unfavorably configured for transcriptional elongation: the complex terminates transcription by (1) catalyzing dephosphorylation of the C-terminal domain (CTD) of Pol II subunit Polr2A/Rbp1 and Spt5, and (2) degrading the exiting nascent RNA transcript via endonuclease activity. The integrator complex is also involved in the 3'-end processing of the U7 snRNA, and also the spliceosomal snRNAs U1, U2, U4 and U5. The sequence is that of Integrator complex subunit 2 from Drosophila melanogaster (Fruit fly).